A 1790-amino-acid polypeptide reads, in one-letter code: Vitellogenin (1790 aa).

A signal peptide spans 1–19; the sequence is MWSTVALCLLVGLSYVSSS. A Vitellogenin domain is found at 23 to 799; that stretch reads WKDNTEYVYS…SAESSFPKIM (777 aa). N-linked (GlcNAc...) asparagine glycosylation is found at Asn219 and Asn297. A compositionally biased stretch (acidic residues) spans 342–353; sequence LMEDSSSEESSE. The disordered stretch occupies residues 342 to 400; the sequence is LMEDSSSEESSEQEMTHRRFRRSANSLTKQWRESSEEWNQQQQQPRPQLTRAPHSPLLP. The segment covering 378–389 has biased composition (low complexity); it reads EWNQQQQQPRPQ. N-linked (GlcNAc...) asparagine glycosylation is found at Asn554, Asn573, Asn893, Asn1345, Asn1416, Asn1430, Asn1480, Asn1699, and Asn1735. Residues 1466–1675 enclose the VWFD domain; that stretch reads PTCVIDQTTA…SYQVEKGQQW (210 aa). Cys1468 and Cys1638 are joined by a disulfide.

The protein localises to the secreted. Functionally, precursor of the egg-yolk proteins that are sources of nutrients during embryonic development. The sequence is that of Vitellogenin (VTG) from Anthonomus grandis (Mexican cotton boll weevil).